The sequence spans 118 residues: REPTOR-binding partner (118 aa).

Over residues methionine 1–glutamine 20 the composition is skewed to polar residues. Positions methionine 1–serine 53 are disordered. Positions threonine 36 to serine 53 are enriched in basic and acidic residues. The basic motif stretch occupies residues lysine 40–lysine 77. The 51-residue stretch at lysine 40–isoleucine 90 folds into the bZIP domain. A leucine-zipper region spans residues leucine 82–leucine 89.

The protein belongs to the bZIP family. ATF subfamily. As to quaternary structure, homodimer. Interacts (via C-terminus) with REPTOR (via C-terminus).

It localises to the nucleus. It is found in the chromosome. In terms of biological role, transcriptional regulator that acts in the TORC1 signaling pathway to regulate energy homeostasis and promote survival during nutrient deprivation. Interacts with REPTOR to form a transcriptional activator complex that functions downstream of TORC1 to up-regulate the expression of most target genes induced by TORC1 inhibition. In the complex, acts to enhance the binding of the transcriptional activator REPTOR to the regulatory sequences of target genes. Under normal conditions TORC1 is active, inhibiting the formation of the REPTOR/REPTOR-BP complex by phosphorylating REPTOR and mediates its cytoplasmic retention by forming a docking site for 14-3-3 proteins. Upon TORC1 inhibition resulting from nutrient stress, REPTOR is recruited into the nucleus where it interacts with REPTOR-BP and together they maintain organismal metabolism by activating the expression of target stress response genes including those involved in glycogenesis and triglyceride biosynthesis. The complex also appears to negatively regulate some aspects of TORC1-dependent larval growth. This Drosophila melanogaster (Fruit fly) protein is REPTOR-binding partner.